The primary structure comprises 66 residues: Large ribosomal subunit protein uL29 (66 aa).

This sequence belongs to the universal ribosomal protein uL29 family.

The sequence is that of Large ribosomal subunit protein uL29 from Borrelia recurrentis (strain A1).